The chain runs to 542 residues: Nibrin homolog (542 aa).

Residues 25–90 enclose the FHA domain; the sequence is YKVGRKGCDI…YGTFVKTDLG (66 aa). In terms of domain architecture, BRCT spans 119 to 195; the sequence is IYRLSLIPLV…KTIILTNWVM (77 aa). Residues 409–430 are disordered; that stretch reads SRGHMDEKNSSDSVTIRRDRND. The involved in MRE11-binding stretch occupies residues 465-500; it reads VDFKRFRKGNVTCGNSFSSLIPFAKDPYKEYDSWDV.

This sequence belongs to the Nibrin family. As to quaternary structure, component of the MRN complex composed of two heterodimers RAD50 and MRE11 associated with a single NBS1.

It is found in the nucleus. The protein localises to the chromosome. Component of the MRN complex, which plays a central role in double-strand break (DSB) repair, DNA recombination, maintenance of telomere integrity and meiosis. The MRN complex is involved in the repair of DNA double-strand breaks (DSBs) via homologous recombination (HR), an error-free mechanism which primarily occurs during S and G2 phases. The complex (1) mediates the end resection of damaged DNA, which generates proper single-stranded DNA, a key initial steps in HR, and is (2) required for the recruitment of other repair factors and efficient activation of ATM and ATR upon DNA damage. The MRN complex possesses single-strand endonuclease activity and double-strand-specific 3'-5' exonuclease activity, which are provided by MRE11, to initiate end resection, which is required for single-strand invasion and recombination. Within the MRN complex, NBS1 acts as a protein-protein adapter, which specifically recognizes and binds phosphorylated proteins, promoting their recruitment to DNA damage sites. Recruits MRE11 and RAD50 components of the MRN complex to DSBs in response to DNA damage. The polypeptide is Nibrin homolog (Arabidopsis thaliana (Mouse-ear cress)).